The sequence spans 85 residues: Large ribosomal subunit protein bL27 (85 aa).

Residues 1-20 (MATKKAGGSTRNGRDSEAKR) are disordered.

The protein belongs to the bacterial ribosomal protein bL27 family.

This Pasteurella multocida (strain Pm70) protein is Large ribosomal subunit protein bL27.